The following is a 337-amino-acid chain: Cell-surface associated glycoprotein DFI1 (337 aa).

The Cytoplasmic segment spans residues 1-21 (MEKLSINNNNNNRRYQSRRFD). Residues 22–42 (GITIIRIVVLVFIVTVSTYFV) traverse the membrane as a helical segment. Topologically, residues 43–269 (NSYTCNQPHH…NGGGLSHTNR (227 aa)) are extracellular. 4 N-linked (GlcNAc...) asparagine glycosylation sites follow: asparagine 53, asparagine 65, asparagine 87, and asparagine 100. Low complexity-rich tracts occupy residues 124-220 (SSTF…TSAS) and 241-259 (SVIS…KNND). 2 disordered regions span residues 124 to 224 (SSTF…QHVT) and 241 to 265 (SVIS…GGLS). Residues 270-290 (IVVGVVVGVGGSILIGLLAVL) form a helical membrane-spanning segment. Positions 273-277 (GVVVG) match the Glycophorin A motif. The Cytoplasmic portion of the chain corresponds to 291–337 (FYLRKRNNRDYEGGWTFWRKNEKLGSDEFFNGELGVRDRNINQGSNF). Residues 301–314 (YEGGWTFWRKNEKL) carry the Calmodulin-binding motif.

It belongs to the MID2 like cell wall stress sensor family. In terms of processing, cross-linked to the carbohydrate polymers of the cell wall. O-glycosylated by MNT1 and MNT2. Also N-glycosylated.

It is found in the cell membrane. The protein localises to the cell septum. Its subcellular location is the secreted. It localises to the cell wall. In terms of biological role, cell-surface associated glycoprotein that acts as a plasma membrane receptor-type protein which senses the presence of matrix. Binds to calmodulin in response to environmental conditions and initiates a signaling cascade that activates CEK1, thus promoting invasive filamentation. Involved in the maintenance of the cell wall. In Candida albicans (strain SC5314 / ATCC MYA-2876) (Yeast), this protein is Cell-surface associated glycoprotein DFI1.